We begin with the raw amino-acid sequence, 476 residues long: Cysteine--tRNA ligase (476 aa).

C31 contributes to the Zn(2+) binding site. Residues 33-43 carry the 'HIGH' region motif; that stretch reads PTVYNYAHIGN. Positions 211, 236, and 240 each coordinate Zn(2+). A 'KMSKS' region motif is present at residues 269–273; sequence KMSKS. K272 serves as a coordination point for ATP.

The protein belongs to the class-I aminoacyl-tRNA synthetase family. In terms of assembly, monomer. The cofactor is Zn(2+).

Its subcellular location is the cytoplasm. The catalysed reaction is tRNA(Cys) + L-cysteine + ATP = L-cysteinyl-tRNA(Cys) + AMP + diphosphate. The sequence is that of Cysteine--tRNA ligase from Xanthomonas oryzae pv. oryzae (strain MAFF 311018).